We begin with the raw amino-acid sequence, 111 residues long: Resistin-like alpha (111 aa).

Positions 1-23 (MKTATCSLLICVFLLQLMVPVNT) are cleaved as a signal peptide. Intrachain disulfides connect Cys55–Cys108, Cys67–Cys107, Cys76–Cys93, Cys78–Cys95, and Cys82–Cys97.

This sequence belongs to the resistin/FIZZ family. In terms of assembly, monomer. Highest levels in adipose tissue.

It is found in the secreted. Probable hormone. Plays a role in pulmonary vascular remodeling. The polypeptide is Resistin-like alpha (Retnla) (Rattus norvegicus (Rat)).